Reading from the N-terminus, the 124-residue chain is uncharacterized protein (124 aa).

The dksA C4-type; degenerate zinc finger occupies 73 to 94; the sequence is CEETGAPIPLAKLAVLPTARTA.

This is an uncharacterized protein from Bacillus subtilis (strain 168).